The primary structure comprises 682 residues: MCGIFAYMNYRVPRTRKEIFETLIKGLQRLEYRGYDSAGVAIDGNNNEVKERHIQLVKKRGNVKALDEELYKQDSMDLKVEFETHFGIAHTRWATHGVPSAVNSHPQRSDKGNEFVVIHNGIITNYKDLRKFLESKGYEFESETDTETIAKLIKYVFDNRETEDITFSTLVERVIQQLEGAFALVFKSIHYPGEAVATRRGSPLLIGVRSKYKLSTEQIPVLYRTRNIENVKNICKTRMKRLDSSTCLHAVGNKAVEFFFASDASAIIEHTNRVIFLEDDDIAAVADGKLSIHRVKRLASDDPSRAIQTLQMELQQIMKGNFSAFMQKEIFEQPESVFNTMRGRVNFETNTVLLGGLKDHLKEIRRCRRLIVIGCGTSYHAAVATRQVLEELTELPVMVELASDFLDRNTPVFRDDVCFFISQSGETADTLLALRYCKDRRALTVGVTNTVGSSISRETDCGVHINAGPEIGVASTKAYTSQFISLVMFGLMMSEDRISLQNRRREIIHGLKSLPELIKEVLSLDEKIHDLALELYTQRSLLVMGRGYNYATCLEGALKIKEITYMHSEGILAGELKHGPLALIDKQMPVIMVIMKDPCFAKCQNALQQVTARQGRPIILCSKDDTESSKFAYKTIELPHTVDCLQGILSVIPLQLLSFHLAVLRGYDVDFPRNLAKSVTVE.

Cys2 acts as the For GATase activity in catalysis. The region spanning 2-288 is the Glutamine amidotransferase type-2 domain; that stretch reads CGIFAYMNYR…DDDIAAVADG (287 aa). Ser244 carries the phosphoserine modification. SIS domains follow at residues 360–499 and 531–672; these read HLKE…DRIS and LALE…VDFP. Substrate-binding positions include 377–378, 422–424, Thr427, and His578; these read TS and SQS.

It catalyses the reaction D-fructose 6-phosphate + L-glutamine = D-glucosamine 6-phosphate + L-glutamate. It participates in nucleotide-sugar biosynthesis; UDP-N-acetyl-alpha-D-glucosamine biosynthesis; alpha-D-glucosamine 6-phosphate from D-fructose 6-phosphate: step 1/1. Functionally, controls the flux of glucose into the hexosamine pathway. Most likely involved in regulating the availability of precursors for N- and O-linked glycosylation of proteins. This is Glutamine--fructose-6-phosphate aminotransferase [isomerizing] 2 (GFPT2) from Bos taurus (Bovine).